Here is a 251-residue protein sequence, read N- to C-terminus: Imidazole glycerol phosphate synthase subunit HisF (251 aa).

Active-site residues include Asp11 and Asp130.

It belongs to the HisA/HisF family. Heterodimer of HisH and HisF.

The protein resides in the cytoplasm. It carries out the reaction 5-[(5-phospho-1-deoxy-D-ribulos-1-ylimino)methylamino]-1-(5-phospho-beta-D-ribosyl)imidazole-4-carboxamide + L-glutamine = D-erythro-1-(imidazol-4-yl)glycerol 3-phosphate + 5-amino-1-(5-phospho-beta-D-ribosyl)imidazole-4-carboxamide + L-glutamate + H(+). Its pathway is amino-acid biosynthesis; L-histidine biosynthesis; L-histidine from 5-phospho-alpha-D-ribose 1-diphosphate: step 5/9. In terms of biological role, IGPS catalyzes the conversion of PRFAR and glutamine to IGP, AICAR and glutamate. The HisF subunit catalyzes the cyclization activity that produces IGP and AICAR from PRFAR using the ammonia provided by the HisH subunit. The chain is Imidazole glycerol phosphate synthase subunit HisF from Listeria welshimeri serovar 6b (strain ATCC 35897 / DSM 20650 / CCUG 15529 / CIP 8149 / NCTC 11857 / SLCC 5334 / V8).